A 360-amino-acid polypeptide reads, in one-letter code: Mannonate dehydratase (360 aa).

Belongs to the mannonate dehydratase family. It depends on Fe(2+) as a cofactor. The cofactor is Mn(2+).

The catalysed reaction is D-mannonate = 2-dehydro-3-deoxy-D-gluconate + H2O. It functions in the pathway carbohydrate metabolism; pentose and glucuronate interconversion. Functionally, catalyzes the dehydration of D-mannonate. This is Mannonate dehydratase (uxuA) from Thermotoga maritima (strain ATCC 43589 / DSM 3109 / JCM 10099 / NBRC 100826 / MSB8).